We begin with the raw amino-acid sequence, 145 residues long: UPF0179 protein MmarC7_0952 (145 aa).

It belongs to the UPF0179 family.

The sequence is that of UPF0179 protein MmarC7_0952 from Methanococcus maripaludis (strain C7 / ATCC BAA-1331).